Reading from the N-terminus, the 382-residue chain is N-acetylglucosamine-6-phosphate deacetylase (382 aa).

Position 131 (Glu131) interacts with a divalent metal cation. Thr142–His143 is a substrate binding site. The a divalent metal cation site is built by His195 and His216. Residues Asn219–Ala220, Arg227, and Asp248–His251 contribute to the substrate site. Catalysis depends on Asp273, which acts as the Proton donor/acceptor. Leu306 to Gly308 contacts substrate.

This sequence belongs to the metallo-dependent hydrolases superfamily. NagA family. As to quaternary structure, homotetramer. Requires a divalent metal cation as cofactor.

The enzyme catalyses N-acetyl-D-glucosamine 6-phosphate + H2O = D-glucosamine 6-phosphate + acetate. It participates in amino-sugar metabolism; N-acetylneuraminate degradation; D-fructose 6-phosphate from N-acetylneuraminate: step 4/5. In terms of biological role, involved in the first committed step in the biosynthesis of amino-sugar-nucleotides. Catalyzes the hydrolysis of the N-acetyl group of N-acetylglucosamine-6-phosphate (GlcNAc-6-P) to yield glucosamine 6-phosphate and acetate. Can probably also catalyze the deacetylation of N-acetyl-D-galactosamine 6-phosphate to D-galactosamine 6-phosphate. The sequence is that of N-acetylglucosamine-6-phosphate deacetylase (nagA) from Escherichia coli O157:H7.